The primary structure comprises 268 residues: Microtubule-associated protein RP/EB family member 1 (268 aa).

A2 bears the N-acetylalanine mark. The Calponin-homology (CH) domain maps to 14 to 116; it reads NLSRHDMLAW…FVQWFKKFFD (103 aa). Residue K66 is modified to N6-crotonyllysine. Y124 is modified (phosphotyrosine). Positions 124-268 are interaction with MTUS2/TIP150; that stretch reads YDPVAARQGQ…GGPQEEQEEY (145 aa). Residues 146 to 160 show a composition bias toward low complexity; that stretch reads LNKPKKPLSSSSAAP. The disordered stretch occupies residues 146–191; the sequence is LNKPKKPLSSSSAAPQRPISTQRTAAAPKAGPGVVRKNPGVGNGDD. S155 and S165 each carry phosphoserine. Positions 185-255 constitute an EB1 C-terminal domain; that stretch reads GVGNGDDEAA…LYATDEGFVI (71 aa). An interaction with CDK5RAP2 region spans residues 185–268; sequence GVGNGDDEAA…GGPQEEQEEY (84 aa). The segment at 206 to 211 is interaction with APC; the sequence is TVEDLE. Positions 208–268 are DCTN1-binding; that stretch reads EDLEKERDFY…GGPQEEQEEY (61 aa). Residue K220 is modified to N6-acetyllysine. The interval 220 to 242 is APC-binding; the sequence is KLRNIELICQENEGENDPVLQRI. The interaction with SKA1 stretch occupies residues 232–255; sequence EGENDPVLQRIVDILYATDEGFVI.

The protein belongs to the MAPRE family. Homodimer. Heterodimer with MAPRE3. Interacts with DCTN1, DCTN2, TERF1 and dynein intermediate chain. Interaction with DIAPH1 and DIAPH2. Interacts (via C-terminal residues 206-211) with APC (via C-terminal residues 2674-2845); the interaction inhibits association with and bundling of F-actin. Interacts with CLASP2, DST, KIF2C and STIM1; probably required for their targeting to the growing microtubule plus ends. Interacts with MTUS2; interaction is direct and probably targets MTUS2 to microtubules. Interacts (via C-terminus) with SKA1 (via SXIP motif); the interaction is direct and stabilizes the kinetochore-microtubule attachment of the SKA1 complex. Interacts with APC2. Interacts with CLASP1. Interacts with CDK5RAP2. Interacts with MACF1. Interacts with RABL2/RABL2A; binds preferentially to GTP-bound RABL2. Interacts with KCNAB2. Interacts (via C-terminus) with CLIP1. Interacts with SLAIN2 and SLAIN1. Interacts with KIF18B; this interaction is required for efficient accumulation of KIF18B at microtubule plus ends. Interacts with MISP. Interacts with KNSTRN. Interacts with NCKAP5L. Interacts with CAMSAP2. Interacts with PDE4DIP isoform 13/MMG8/SMYLE; this interaction is required for its recruitment to the Golgi apparatus. Forms a pericentrosomal complex with AKAP9, CDK5RAP2 and PDE4DIP isoform 13/MMG8/SMYLE; within this complex, MAPRE1 binding to CDK5RAP2 may be mediated by PDE4DIP. Interacts with AKNA. Interacts with GAS2L1, GAS2L2, and GAS2L3. Interacts with RARRES1 and AGBL2. In terms of processing, acetylation at Lys-220 by KAT2B/PCAF promotes dynamic kinetochore-microtubule interactions in early mitosis. Post-translationally, crotonylated by KAT5 during mitosis, promoting astral microtubule plasticity and dynamic connection between astral microtubules and the cortex during mitotic chromosome segregation, thereby ensuring accurate spindle positioning in mitosis. Decrotonylated by HDAC3.

Its subcellular location is the cytoplasm. The protein resides in the cytoskeleton. It localises to the microtubule organizing center. It is found in the centrosome. The protein localises to the golgi apparatus. Its subcellular location is the spindle. The protein resides in the spindle pole. Its function is as follows. Plus-end tracking protein (+TIP) that binds to the plus-end of microtubules and regulates the dynamics of the microtubule cytoskeleton. Recruits other +TIP proteins to microtubules by binding to a conserved Ser-X-Leu-Pro (SXLP) motif in their polypeptide chains. Promotes cytoplasmic microtubule nucleation and elongation. Involved in mitotic spindle positioning by stabilizing microtubules and promoting dynamic connection between astral microtubules and the cortex during mitotic chromosome segregation. Assists chromosome alignment in metaphase by recruiting the SKA complex to the spindle and stabilizing its interactions with microtubule bundles (K-fibers). Also acts as a regulator of minus-end microtubule organization: interacts with the complex formed by AKAP9 and PDE4DIP, leading to recruit CAMSAP2 to the Golgi apparatus, thereby tethering non-centrosomal minus-end microtubules to the Golgi, an important step for polarized cell movement. Promotes elongation of CAMSAP2-decorated microtubule stretches on the minus-end of microtubules. Acts as a regulator of autophagosome transport via interaction with CAMSAP2. Functions downstream of Rho GTPases and DIAPH1 in stable microtubule formation. May play a role in cell migration. The protein is Microtubule-associated protein RP/EB family member 1 (MAPRE1) of Pongo abelii (Sumatran orangutan).